Here is a 134-residue protein sequence, read N- to C-terminus: Auxin-responsive protein SAUR40 (134 aa).

It belongs to the ARG7 family. In terms of assembly, interacts with and inhibits PP2C-D subfamily of type 2C phosphatases such as PP2C67/PP2C-D1.

The protein localises to the cytoplasm. In terms of biological role, provide a mechanistic link between auxin and plasma membrane H(+)-ATPases (PM H(+)-ATPases, e.g. AHA1 and AHA2), and triggers PM H(+)-ATPases activity by promoting phosphorylation of their C-terminal autoinhibitory domain as a result of PP2C-D subfamily of type 2C phosphatases inhibition, thus leading to the acidification of the apoplast and the facilitation of solutes and water uptake to drive cell expansion. Plays a role in the regulation of cell expansion, root meristem patterning and auxin transport. The polypeptide is Auxin-responsive protein SAUR40 (Arabidopsis thaliana (Mouse-ear cress)).